Reading from the N-terminus, the 426-residue chain is Chaperone SurA (426 aa).

The signal sequence occupies residues 1–13 (MLGALFLGTAANA). PpiC domains lie at 164–265 (SEEL…KLLE) and 274–373 (RDEV…EVLG).

Its subcellular location is the periplasm. It carries out the reaction [protein]-peptidylproline (omega=180) = [protein]-peptidylproline (omega=0). In terms of biological role, chaperone involved in the correct folding and assembly of outer membrane proteins. Recognizes specific patterns of aromatic residues and the orientation of their side chains, which are found more frequently in integral outer membrane proteins. May act in both early periplasmic and late outer membrane-associated steps of protein maturation. The chain is Chaperone SurA from Pseudomonas fluorescens (strain Pf0-1).